Reading from the N-terminus, the 242-residue chain is Protein odd-skipped-related 1 (242 aa).

3 C2H2-type zinc fingers span residues 128–150, 156–178, and 184–207; these read FICKYCARHFTKSYNLMIHERTH, FHCETCGKSFRRQDHLRDHKYIH, and HKCEICGKGFCQLRTLNVHRSCHH.

Belongs to the Odd C2H2-type zinc-finger protein family.

The protein resides in the nucleus. May function as transcription regulator. Essential for larval development. Required for morphogenesis and function of the digestive tract. This Caenorhabditis elegans protein is Protein odd-skipped-related 1.